A 498-amino-acid polypeptide reads, in one-letter code: ATP synthase subunit beta, chloroplastic (498 aa).

Threonine 6 is subject to Phosphothreonine. Residue serine 13 is modified to Phosphoserine. 172–179 is an ATP binding site; the sequence is GGAGVGKT.

This sequence belongs to the ATPase alpha/beta chains family. In terms of assembly, F-type ATPases have 2 components, CF(1) - the catalytic core - and CF(0) - the membrane proton channel. CF(1) has five subunits: alpha(3), beta(3), gamma(1), delta(1), epsilon(1). CF(0) has four main subunits: a(1), b(1), b'(1) and c(9-12).

Its subcellular location is the plastid. The protein resides in the chloroplast thylakoid membrane. The enzyme catalyses ATP + H2O + 4 H(+)(in) = ADP + phosphate + 5 H(+)(out). Produces ATP from ADP in the presence of a proton gradient across the membrane. The catalytic sites are hosted primarily by the beta subunits. The polypeptide is ATP synthase subunit beta, chloroplastic (Raphanus sativus (Radish)).